A 66-amino-acid polypeptide reads, in one-letter code: ATP synthase protein 8 (66 aa).

The chain crosses the membrane as a helical span at residues 8–24; it reads PWPMVIMSMILTLFYIT. K54 carries the N6-acetyllysine; alternate modification. K54 is modified (N6-succinyllysine; alternate). Position 57 is an N6-acetyllysine (K57).

It belongs to the ATPase protein 8 family. As to quaternary structure, F-type ATPases have 2 components, CF(1) - the catalytic core - and CF(0) - the membrane proton channel. Component of an ATP synthase complex composed of ATP5PB, ATP5MC1, ATP5F1E, ATP5PD, ATP5ME, ATP5PF, ATP5MF, MT-ATP6, MT-ATP8, ATP5F1A, ATP5F1B, ATP5F1D, ATP5F1C, ATP5PO, ATP5MG, ATP5MK and ATP5MJ. Interacts with PRICKLE3.

The protein resides in the mitochondrion membrane. In terms of biological role, mitochondrial membrane ATP synthase (F(1)F(0) ATP synthase or Complex V) produces ATP from ADP in the presence of a proton gradient across the membrane which is generated by electron transport complexes of the respiratory chain. F-type ATPases consist of two structural domains, F(1) - containing the extramembraneous catalytic core and F(0) - containing the membrane proton channel, linked together by a central stalk and a peripheral stalk. During catalysis, ATP synthesis in the catalytic domain of F(1) is coupled via a rotary mechanism of the central stalk subunits to proton translocation. Part of the complex F(0) domain. Minor subunit located with subunit a in the membrane. In Alouatta guariba (Brown howler monkey), this protein is ATP synthase protein 8 (MT-ATP8).